The chain runs to 354 residues: Methylthioribose-1-phosphate isomerase (354 aa).

Residues 48–50, Arg-95, and Gln-202 each bind substrate; that span reads RGA. The Proton donor role is filled by Asp-243. Substrate is bound at residue 253–254; the sequence is NK.

This sequence belongs to the eIF-2B alpha/beta/delta subunits family. MtnA subfamily.

The enzyme catalyses 5-(methylsulfanyl)-alpha-D-ribose 1-phosphate = 5-(methylsulfanyl)-D-ribulose 1-phosphate. The protein operates within amino-acid biosynthesis; L-methionine biosynthesis via salvage pathway; L-methionine from S-methyl-5-thio-alpha-D-ribose 1-phosphate: step 1/6. In terms of biological role, catalyzes the interconversion of methylthioribose-1-phosphate (MTR-1-P) into methylthioribulose-1-phosphate (MTRu-1-P). The protein is Methylthioribose-1-phosphate isomerase of Roseiflexus castenholzii (strain DSM 13941 / HLO8).